The primary structure comprises 286 residues: uncharacterized protein (286 aa).

3 residues coordinate NADP(+): Ile54, Asn128, and Lys162. Ser178 serves as the catalytic Proton donor. Residues Tyr192, Lys196, Ile225, and Thr227 each coordinate NADP(+). The Proton acceptor role is filled by Tyr192. The active-site Lowers pKa of active site Tyr is the Lys196.

It belongs to the short-chain dehydrogenases/reductases (SDR) family.

This is an uncharacterized protein from Schizosaccharomyces pombe (strain 972 / ATCC 24843) (Fission yeast).